We begin with the raw amino-acid sequence, 299 residues long: Homoserine kinase (299 aa).

85–95 (PMSRGLGSSAT) is an ATP binding site.

It belongs to the GHMP kinase family. Homoserine kinase subfamily.

The protein localises to the cytoplasm. It catalyses the reaction L-homoserine + ATP = O-phospho-L-homoserine + ADP + H(+). It functions in the pathway amino-acid biosynthesis; L-threonine biosynthesis; L-threonine from L-aspartate: step 4/5. In terms of biological role, catalyzes the ATP-dependent phosphorylation of L-homoserine to L-homoserine phosphate. The sequence is that of Homoserine kinase from Clostridium novyi (strain NT).